The sequence spans 335 residues: UPF0284 protein TK0853 (335 aa).

This sequence belongs to the UPF0284 family.

The polypeptide is UPF0284 protein TK0853 (Thermococcus kodakarensis (strain ATCC BAA-918 / JCM 12380 / KOD1) (Pyrococcus kodakaraensis (strain KOD1))).